A 417-amino-acid chain; its full sequence is CinA-like protein (417 aa).

This sequence belongs to the CinA family.

In Gloeothece citriformis (strain PCC 7424) (Cyanothece sp. (strain PCC 7424)), this protein is CinA-like protein.